A 646-amino-acid chain; its full sequence is Galactofuranosyltransferase GlfT2 (646 aa).

UDP-alpha-D-galactofuranose contacts are provided by Arg182, Gln211, Asn240, and Asp267. 2 residues coordinate Mn(2+): Asp267 and Asp269. Asp384 acts as the Proton acceptor in catalysis. Residue His408 participates in Mn(2+) binding.

The protein belongs to the glycosyltransferase 2 family. As to quaternary structure, homotetramer. It depends on Mn(2+) as a cofactor. Mg(2+) is required as a cofactor.

It localises to the cell membrane. It carries out the reaction beta-D-galactofuranosyl-(1-&gt;5)-beta-D-galactofuranosyl-(1-&gt;4)-alpha-L-rhamnosyl-(1-&gt;3)-N-acetyl-alpha-D-glucosaminyl-diphospho-trans,octa-cis-decaprenol + 28 UDP-alpha-D-galactofuranose = [beta-D-galactofuranosyl-(1-&gt;5)-beta-D-galactofuranosyl-(1-&gt;6)]14-beta-D-galactofuranosyl-(1-&gt;5)-beta-D-galactofuranosyl-(1-&gt;4)-alpha-L-rhamnopyranosyl-(1-&gt;3)-N-acetyl-alpha-D-glucosaminyl-diphospho-trans,octa-cis-decaprenol + 28 UDP + 28 H(+). It participates in cell wall biogenesis; cell wall polysaccharide biosynthesis. In terms of biological role, involved in the galactan polymerization of the arabinogalactan (AG) region of the mycolylarabinogalactan-peptidoglycan (mAGP) complex, an essential component of the mycobacteria cell wall. Thus, successively transfers approximately 28 galactofuranosyl (Galf) residues from UDP-galactofuranose (UDP-Galf) onto the galactofuranosyl-galactofuranosyl-rhamnosyl-GlcNAc-diphospho-decaprenol (Galf-Galf-Rha-GlcNAc-PP-C50) acceptor produced by GlfT1, with alternating 1-&gt;5 and 1-&gt;6 links, forming a galactan domain with approximately 30 galactofuranosyl residues. In Mycolicibacterium smegmatis (strain ATCC 700084 / mc(2)155) (Mycobacterium smegmatis), this protein is Galactofuranosyltransferase GlfT2.